A 473-amino-acid polypeptide reads, in one-letter code: Cyprosin (473 aa).

A propeptide spans 1–33 (LKKRKVNILNHPGEHAGSNDANARRKYGVRGNF) (activation peptide). The 420-residue stretch at 51–470 (YFGEIGIGTP…DYGNLRVGFA (420 aa)) folds into the Peptidase A1 domain. Residue Asp-69 is part of the active site. Disulfide bonds link Cys-82-Cys-88 and Cys-247-Cys-251. Asp-256 is a catalytic residue. The region spanning 281-384 (VMSQQCKSLV…DKLCERLPSP (104 aa)) is the Saposin B-type domain. 4 disulfide bridges follow: Cys-286–Cys-378, Cys-311–Cys-350, Cys-317–Cys-347, and Cys-392–Cys-429. An N-linked (GlcNAc...) asparagine glycan is attached at Asn-364.

This sequence belongs to the peptidase A1 family. As to expression, mostly present in the violet parts of styles and corollas of mature flowers.

The chain is Cyprosin (CYPRO1) from Cynara cardunculus (Cardoon).